The sequence spans 896 residues: Zinc finger protein 574 (896 aa).

C2H2-type zinc fingers lie at residues Y16–H38, Y76–H98, and Y126–H148. Residue S164 is modified to Phosphoserine. A C2H2-type 4 zinc finger spans residues Y214–H236. The interval A239–A301 is disordered. Residues P247–S257 show a composition bias toward polar residues. A compositionally biased stretch (basic and acidic residues) spans H274–D287. Phosphoserine is present on S298. 4 C2H2-type zinc fingers span residues L309–H331, F336–H358, F364–H386, and H392–H413. The disordered stretch occupies residues F434–P460. 6 C2H2-type zinc fingers span residues Y466–H489, H495–H517, F523–H545, Y551–H573, Y579–H601, and Y607–H630. The segment at H636–A659 adopts a C2H2-type 15; degenerate zinc-finger fold. The C2H2-type 16 zinc finger occupies F667–H689. Positions A687–A733 are disordered. Low complexity predominate over residues A707 to P732. A Phosphoserine modification is found at S717. T724 is subject to Phosphothreonine. Phosphoserine is present on S728. 4 C2H2-type zinc fingers span residues L738–H760, Y766–H788, F794–H816, and Y822–H844. R832 carries the post-translational modification Asymmetric dimethylarginine.

This sequence belongs to the krueppel C2H2-type zinc-finger protein family.

Its subcellular location is the nucleus. Functionally, may be involved in transcriptional regulation. This Macaca fascicularis (Crab-eating macaque) protein is Zinc finger protein 574 (ZNF574).